Consider the following 462-residue polypeptide: NAD-capped RNA hydrolase NUDT12 (462 aa).

ANK repeat units follow at residues 11-40, 45-74, and 78-98; these read EIVTQFHCSAAEGDIAKLTGILSHSPSLLN, NGWTALMYAARNGHPEIVQFLLEKGCDRSI, and SRQTALDIAVFWGYKHIANLL. Lys185 is subject to N6-succinyllysine. Residues Cys284 and Cys287 each coordinate Zn(2+). Lys292 is subject to N6-succinyllysine. 2 residues coordinate Zn(2+): Cys302 and Cys307. Substrate-binding positions include Tyr318, 354-356, Glu370, Glu374, and Glu415; that span reads AGF. Residues 319-453 enclose the Nudix hydrolase domain; that stretch reads PRVDPVVIMQ…SRAIAHQLIK (135 aa). Mg(2+)-binding residues include Ala354, Glu370, Glu374, and Glu415. Residues 355 to 376 carry the Nudix box motif; the sequence is GFIEPGETIEDAVRREVEEESG. Positions 460–462 match the Microbody targeting signal motif; it reads PNL.

Belongs to the Nudix hydrolase family. NudC subfamily. In terms of assembly, homodimer. Homodimerization is essential for its catalytic activity and protein stability. Interacts (via ANK repeats) with BLMH. It depends on Mg(2+) as a cofactor. Zn(2+) serves as cofactor.

The protein resides in the cytoplasm. The protein localises to the peroxisome. Its subcellular location is the cytoplasmic granule. It carries out the reaction a 5'-end NAD(+)-phospho-ribonucleoside in mRNA + H2O = a 5'-end phospho-adenosine-phospho-ribonucleoside in mRNA + beta-nicotinamide D-ribonucleotide + 2 H(+). The catalysed reaction is NAD(+) + H2O = beta-nicotinamide D-ribonucleotide + AMP + 2 H(+). The enzyme catalyses NADH + H2O = reduced beta-nicotinamide D-ribonucleotide + AMP + 2 H(+). It catalyses the reaction NADPH + H2O = reduced beta-nicotinamide D-ribonucleotide + adenosine 2',5'-bisphosphate + 2 H(+). Functionally, mRNA decapping enzyme that specifically removes the nicotinamide adenine dinucleotide (NAD) cap from a subset of mRNAs by hydrolyzing the diphosphate linkage to produce nicotinamide mononucleotide (NMN) and 5' monophosphate mRNA. The NAD-cap is present at the 5'-end of some RNAs; in contrast to the canonical N7 methylguanosine (m7G) cap, the NAD cap promotes mRNA decay. Preferentially acts on NAD-capped transcripts in response to nutrient stress. Also acts on free nicotinamide adenine dinucleotide molecules: hydrolyzes NAD(H) into NMN(H) and AMP, and NADPH into NMNH and 2',5'-ADP. May act to regulate the concentration of peroxisomal nicotinamide nucleotide cofactors required for oxidative metabolism in this organelle. Regulates the levels of circadian clock components PER1, PER2, PER3 and CRY2 in the liver. The polypeptide is NAD-capped RNA hydrolase NUDT12 (Homo sapiens (Human)).